We begin with the raw amino-acid sequence, 304 residues long: Elongation factor Ts (304 aa).

Residues 82–85 (TDFV) form an involved in Mg(2+) ion dislocation from EF-Tu region.

The protein belongs to the EF-Ts family.

The protein resides in the cytoplasm. Functionally, associates with the EF-Tu.GDP complex and induces the exchange of GDP to GTP. It remains bound to the aminoacyl-tRNA.EF-Tu.GTP complex up to the GTP hydrolysis stage on the ribosome. In Symbiobacterium thermophilum (strain DSM 24528 / JCM 14929 / IAM 14863 / T), this protein is Elongation factor Ts.